The following is a 387-amino-acid chain: Exodeoxyribonuclease 7 large subunit (387 aa).

Belongs to the XseA family. In terms of assembly, heterooligomer composed of large and small subunits.

The protein resides in the cytoplasm. The catalysed reaction is Exonucleolytic cleavage in either 5'- to 3'- or 3'- to 5'-direction to yield nucleoside 5'-phosphates.. Functionally, bidirectionally degrades single-stranded DNA into large acid-insoluble oligonucleotides, which are then degraded further into small acid-soluble oligonucleotides. This is Exodeoxyribonuclease 7 large subunit from Synechococcus sp. (strain CC9902).